The following is a 261-amino-acid chain: Troponin T, slow skeletal muscle (261 aa).

The segment covering 1–30 (MSDTEEQEYEEEQAEDEEAVEEEAPEEPEP) has biased composition (acidic residues). Disordered stretches follow at residues 1-61 (MSDT…ERVD) and 108-152 (ERAE…KKKV). Ser2 carries the phosphoserine; by CK2 modification. The segment covering 31–40 (VAEREEERPK) has biased composition (basic and acidic residues). The segment covering 42 to 54 (SRPVVPPLIPPKI) has biased composition (pro residues). Over residues 108-148 (ERAEQQRFRTEKERERQAKLAEEKMRKEEEEAKKRAEDDAK) the composition is skewed to basic and acidic residues.

This sequence belongs to the troponin T family. As to quaternary structure, interacts with TPM3. In terms of tissue distribution, expressed in soleus muscle. Isoform 4 is predominantly expressed in fast muscles.

Functionally, troponin T is the tropomyosin-binding subunit of troponin, the thin filament regulatory complex which confers calcium-sensitivity to striated muscle actomyosin ATPase activity. In Rattus norvegicus (Rat), this protein is Troponin T, slow skeletal muscle (Tnnt1).